The primary structure comprises 198 residues: Recombination protein RecR (198 aa).

The C4-type zinc finger occupies C58–C73. Residues S81–P175 form the Toprim domain.

Belongs to the RecR family.

May play a role in DNA repair. It seems to be involved in an RecBC-independent recombinational process of DNA repair. It may act with RecF and RecO. The sequence is that of Recombination protein RecR from Clostridium novyi (strain NT).